The primary structure comprises 89 residues: uncharacterized protein (89 aa).

This sequence to Rhizobium NGR234A y4oN.

This is an uncharacterized protein from Sinorhizobium fredii (strain NBRC 101917 / NGR234).